Reading from the N-terminus, the 366-residue chain is Chorismate synthase (366 aa).

Residues Arg-48 and Arg-54 each coordinate NADP(+). Residues 125–127, 238–239, Gly-278, 293–297, and Arg-319 each bind FMN; these read RSS, NA, and KPTSS.

Belongs to the chorismate synthase family. Homotetramer. FMNH2 is required as a cofactor.

The enzyme catalyses 5-O-(1-carboxyvinyl)-3-phosphoshikimate = chorismate + phosphate. It participates in metabolic intermediate biosynthesis; chorismate biosynthesis; chorismate from D-erythrose 4-phosphate and phosphoenolpyruvate: step 7/7. Catalyzes the anti-1,4-elimination of the C-3 phosphate and the C-6 proR hydrogen from 5-enolpyruvylshikimate-3-phosphate (EPSP) to yield chorismate, which is the branch point compound that serves as the starting substrate for the three terminal pathways of aromatic amino acid biosynthesis. This reaction introduces a second double bond into the aromatic ring system. The chain is Chorismate synthase from Laribacter hongkongensis (strain HLHK9).